A 124-amino-acid polypeptide reads, in one-letter code: Ribonuclease P protein component 2 (124 aa).

This sequence belongs to the eukaryotic/archaeal RNase P protein component 2 family. Consists of a catalytic RNA component and at least 4-5 protein subunits.

It localises to the cytoplasm. It catalyses the reaction Endonucleolytic cleavage of RNA, removing 5'-extranucleotides from tRNA precursor.. In terms of biological role, part of ribonuclease P, a protein complex that generates mature tRNA molecules by cleaving their 5'-ends. The polypeptide is Ribonuclease P protein component 2 (Methanothermobacter thermautotrophicus (strain ATCC 29096 / DSM 1053 / JCM 10044 / NBRC 100330 / Delta H) (Methanobacterium thermoautotrophicum)).